A 510-amino-acid polypeptide reads, in one-letter code: ATP synthase subunit alpha (510 aa).

Glycine 169–threonine 176 is a binding site for ATP.

The protein belongs to the ATPase alpha/beta chains family. As to quaternary structure, F-type ATPases have 2 components, CF(1) - the catalytic core - and CF(0) - the membrane proton channel. CF(1) has five subunits: alpha(3), beta(3), gamma(1), delta(1), epsilon(1). CF(0) has four main subunits: a(1), b(1), b'(1) and c(9-12).

It localises to the cell inner membrane. It carries out the reaction ATP + H2O + 4 H(+)(in) = ADP + phosphate + 5 H(+)(out). Its function is as follows. Produces ATP from ADP in the presence of a proton gradient across the membrane. The alpha chain is a regulatory subunit. In Rhodopseudomonas palustris (strain BisB18), this protein is ATP synthase subunit alpha.